The chain runs to 466 residues: Peptidoglycan-N-acetylglucosamine deacetylase PgdA (466 aa).

The Cytoplasmic segment spans residues 1-5; sequence MKIRW. Residues 6–26 form a helical membrane-spanning segment; that stretch reads IRLSLVAILIIAVVFIGVIGF. Residues 27 to 466 are Extracellular-facing; the sequence is QKYQFSKSRN…FDKTDSRMVK (440 aa). Positions 266–440 constitute a NodB homology domain; the sequence is KRIALTFDDG…KLKSQGYEFV (175 aa). Aspartate 273 (proton acceptor) is an active-site residue. Positions 274, 324, and 328 each coordinate Zn(2+). Substrate is bound at residue tyrosine 365. The Proton donor role is filled by histidine 415.

As to quaternary structure, homodimer. Interacts (via transmembrane domain) with PbpA1 (via transmembrane domain); the interaction is important for the peptidoglycan N-deacetylase function of this protein. The cofactor is Zn(2+).

Its subcellular location is the cell membrane. The protein resides in the secreted. It localises to the cell wall. The catalysed reaction is peptidoglycan-N-acetyl-D-glucosamine + H2O = peptidoglycan-D-glucosamine + acetate.. Its function is as follows. Catalyzes the deacetylation of N-acetylglucosamine (GlcNAc) residues in peptidoglycan (PG). Also deacetylates N-acetylated PG. Does not deacetylate N-acetylmuramic acid. Confers host lysozyme resistance. Critical for virulence and escape from innate immune response of the host. Required for intracellular survival of bacteria in macrophages of the host. Required for successful host colonization. Controls the production of inflammatory mediators in the bone marrow derived macrophages (BMMs) of the infected mouse. Suppresses Toll-like receptor 2 (TLR2)-dependent secretion of interleukin 6 (IL-6) and interferon-beta (IFN-beta) in the macrophages of the infected mouse. May decrease accessibility of pattern recognition receptors (PRRs) such as nucleotide-binding oligomerization domain protein (NOD) 1 of the host to the bacterial cell wall components. Protects cells from autolysis induced by lysozyme or by other autolysis-inducing agents. This chain is Peptidoglycan-N-acetylglucosamine deacetylase PgdA, found in Listeria monocytogenes serotype 1/2a (strain 10403S).